A 344-amino-acid chain; its full sequence is S-methyl-5'-thioadenosine phosphorylase (344 aa).

Phosphate is bound by residues T45, 88–89 (RH), and 121–122 (SA). M238 contributes to the substrate binding site. Residue S239 coordinates phosphate. Position 262–264 (262–264 (DYD)) interacts with substrate.

Belongs to the PNP/MTAP phosphorylase family. MTAP subfamily. In terms of assembly, homotrimer.

The protein resides in the cytoplasm. The protein localises to the nucleus. The enzyme catalyses S-methyl-5'-thioadenosine + phosphate = 5-(methylsulfanyl)-alpha-D-ribose 1-phosphate + adenine. It functions in the pathway amino-acid biosynthesis; L-methionine biosynthesis via salvage pathway; S-methyl-5-thio-alpha-D-ribose 1-phosphate from S-methyl-5'-thioadenosine (phosphorylase route): step 1/1. Functionally, catalyzes the reversible phosphorylation of S-methyl-5'-thioadenosine (MTA) to adenine and 5-methylthioribose-1-phosphate. Involved in the breakdown of MTA, a major by-product of polyamine biosynthesis. Responsible for the first step in the methionine salvage pathway after MTA has been generated from S-adenosylmethionine. Has broad substrate specificity with 6-aminopurine nucleosides as preferred substrates. The protein is S-methyl-5'-thioadenosine phosphorylase of Candida albicans (strain WO-1) (Yeast).